We begin with the raw amino-acid sequence, 119 residues long: Autophagy-related protein 8A (119 aa).

Glycine 117 carries the Phosphatidylethanolamine amidated glycine lipid modification. Residues 118-119 (SA) constitute a propeptide, removed in mature form.

Belongs to the ATG8 family. In terms of assembly, interacts with ATG4. The C-terminal 2 residues are removed by ATG4 to expose Gly-117 at the C-terminus. The C-terminal Gly is then amidated with phosphatidylethanolamine by an activating system similar to that for ubiquitin. Constitutively expressed.

Its subcellular location is the cytoplasmic vesicle. It is found in the autophagosome membrane. The protein resides in the vacuole membrane. The protein localises to the cytoplasm. It localises to the cytoskeleton. Ubiquitin-like modifier involved in cytoplasm to vacuole transport (Cvt) vesicles and autophagosomes formation. May mediate the delivery of the vesicles and autophagosomes to the vacuole via the microtubule cytoskeleton. Functionally, ubiquitin-like modifier involved in autophagosomes formation. May mediate the delivery of the autophagosomes to the vacuole via the microtubule cytoskeleton. This is Autophagy-related protein 8A (ATG8A) from Oryza sativa subsp. indica (Rice).